The sequence spans 120 residues: Large ribosomal subunit protein bL20c (120 aa).

This sequence belongs to the bacterial ribosomal protein bL20 family.

Its subcellular location is the plastid. Its function is as follows. Binds directly to 23S ribosomal RNA and is necessary for the in vitro assembly process of the 50S ribosomal subunit. It is not involved in the protein synthesizing functions of that subunit. The polypeptide is Large ribosomal subunit protein bL20c (Cuscuta obtusiflora (Peruvian dodder)).